The chain runs to 550 residues: Alkaline phosphatase PhoV (550 aa).

The signal sequence occupies residues 1–20 (MKIKLLCISLAVLFCSSANA). 2 residues coordinate Zn(2+): D48 and T89. The Phosphothreonine intermediate role is filled by T89. Residues N110 and 171-173 (KDR) contribute to the substrate site. Zn(2+)-binding residues include D313, H317, D360, H361, and H491.

It depends on Zn(2+) as a cofactor.

It localises to the cell inner membrane. The catalysed reaction is a phosphate monoester + H2O = an alcohol + phosphate. With respect to regulation, subject to competitive inhibition by phosphate. Inhibited by manganese. Magnesium mildly increases enzyme activity when the zinc concentration is suboptimal. Optimal activity is dependent on the presence of 0.01-2% Triton X-100. Triton X-100 at a concentration of 0.05% increases the activity about fivefold relative to that in its absence. The enzyme is even active in Triton X-100 concentrations up to 80%. 50% inhibition by 4 mM EDTA and 50% inhibition by 48 mM sodium citrate. In terms of biological role, alkaline phosphatase with broad substrate specificity. The protein is Alkaline phosphatase PhoV of Synechococcus elongatus (strain ATCC 33912 / PCC 7942 / FACHB-805) (Anacystis nidulans R2).